The sequence spans 831 residues: Periplasmic nitrate reductase (831 aa).

Residues 1-31 (MKLSRRDFMKANAAVAAAAAAGLTIPTVAKA) constitute a signal peptide (tat-type signal). The 4Fe-4S Mo/W bis-MGD-type domain maps to 40 to 96 (IKWDKAPCRFCGTGCGVLVGTQNGRIVASQGDPDSPVNRGLNCVKGYFLPKIMYGKD). [4Fe-4S] cluster-binding residues include Cys47, Cys50, Cys54, and Cys82. Residues Lys84, Gln151, Asn176, Cys180, 213–220 (WGSNMAEM), 244–248 (STFEH), 263–265 (QTD), Met373, Gln377, Asn483, 509–510 (SD), Lys532, Asp559, and 719–728 (TGRVLEHWHT) contribute to the Mo-bis(molybdopterin guanine dinucleotide) site. Phe795 contacts substrate. Residues Asn803 and Lys820 each contribute to the Mo-bis(molybdopterin guanine dinucleotide) site.

The protein belongs to the prokaryotic molybdopterin-containing oxidoreductase family. NasA/NapA/NarB subfamily. Component of the periplasmic nitrate reductase NapAB complex composed of NapA and NapB. It depends on [4Fe-4S] cluster as a cofactor. Mo-bis(molybdopterin guanine dinucleotide) serves as cofactor. Predicted to be exported by the Tat system. The position of the signal peptide cleavage has not been experimentally proven.

Its subcellular location is the periplasm. The catalysed reaction is 2 Fe(II)-[cytochrome] + nitrate + 2 H(+) = 2 Fe(III)-[cytochrome] + nitrite + H2O. In terms of biological role, catalytic subunit of the periplasmic nitrate reductase complex NapAB. Receives electrons from NapB and catalyzes the reduction of nitrate to nitrite. The sequence is that of Periplasmic nitrate reductase from Yersinia enterocolitica serotype O:8 / biotype 1B (strain NCTC 13174 / 8081).